The primary structure comprises 117 residues: Large ribosomal subunit protein bL20 (117 aa).

This sequence belongs to the bacterial ribosomal protein bL20 family.

Its function is as follows. Binds directly to 23S ribosomal RNA and is necessary for the in vitro assembly process of the 50S ribosomal subunit. It is not involved in the protein synthesizing functions of that subunit. The polypeptide is Large ribosomal subunit protein bL20 (Ruminiclostridium cellulolyticum (strain ATCC 35319 / DSM 5812 / JCM 6584 / H10) (Clostridium cellulolyticum)).